Consider the following 197-residue polypeptide: Small ribosomal subunit protein uS4 (197 aa).

The region spanning 87 to 147 (SRIDNVIFRL…ESKKNTQRMK (61 aa)) is the S4 RNA-binding domain.

It belongs to the universal ribosomal protein uS4 family. Part of the 30S ribosomal subunit. Contacts protein S5. The interaction surface between S4 and S5 is involved in control of translational fidelity.

One of the primary rRNA binding proteins, it binds directly to 16S rRNA where it nucleates assembly of the body of the 30S subunit. Functionally, with S5 and S12 plays an important role in translational accuracy. This is Small ribosomal subunit protein uS4 from Agathobacter rectalis (strain ATCC 33656 / DSM 3377 / JCM 17463 / KCTC 5835 / VPI 0990) (Eubacterium rectale).